Reading from the N-terminus, the 257-residue chain is Alcohol dehydrogenase 1 (257 aa).

9-33 (VFVGGLGFIAYEACKYLMNNDLASL) contacts NAD(+). Residue S137 participates in substrate binding. Y150 serves as the catalytic Proton acceptor.

The protein belongs to the short-chain dehydrogenases/reductases (SDR) family. Homodimer.

It carries out the reaction a primary alcohol + NAD(+) = an aldehyde + NADH + H(+). The enzyme catalyses a secondary alcohol + NAD(+) = a ketone + NADH + H(+). In Ceratitis capitata (Mediterranean fruit fly), this protein is Alcohol dehydrogenase 1 (ADH1).